Reading from the N-terminus, the 210-residue chain is Probable GTP-binding protein EngB (210 aa).

Positions 25–199 (TGIEVAFAGR…RQKLDSWFNE (175 aa)) constitute an EngB-type G domain. GTP-binding positions include 33 to 40 (GRSNAGKS), 60 to 64 (GRTQL), 78 to 81 (DLPG), 145 to 148 (TKAD), and 178 to 180 (FSS). Mg(2+) is bound by residues S40 and T62.

The protein belongs to the TRAFAC class TrmE-Era-EngA-EngB-Septin-like GTPase superfamily. EngB GTPase family. Requires Mg(2+) as cofactor.

Its function is as follows. Necessary for normal cell division and for the maintenance of normal septation. The chain is Probable GTP-binding protein EngB from Klebsiella pneumoniae (strain 342).